The sequence spans 125 residues: Small ribosomal subunit protein uS12 (125 aa).

Asp-89 carries the post-translational modification 3-methylthioaspartic acid. The interval 104 to 125 (TAGVKDRSQSRSKYGAKASKQD) is disordered.

Belongs to the universal ribosomal protein uS12 family. As to quaternary structure, part of the 30S ribosomal subunit. Contacts proteins S8 and S17. May interact with IF1 in the 30S initiation complex.

With S4 and S5 plays an important role in translational accuracy. Its function is as follows. Interacts with and stabilizes bases of the 16S rRNA that are involved in tRNA selection in the A site and with the mRNA backbone. Located at the interface of the 30S and 50S subunits, it traverses the body of the 30S subunit contacting proteins on the other side and probably holding the rRNA structure together. The combined cluster of proteins S8, S12 and S17 appears to hold together the shoulder and platform of the 30S subunit. This Prochlorococcus marinus (strain MIT 9303) protein is Small ribosomal subunit protein uS12.